The primary structure comprises 64 residues: uncharacterized protein (64 aa).

This is an uncharacterized protein from Escherichia coli (strain K12).